The primary structure comprises 220 residues: MKRSASDSPLLFDLPLAPDFSQEQQLMKRGLKHIAGIDEAGRGPLAGPVVAAAVVLDQNDLPEGLDDSKRLTAARREALYEIILTKAITVSVASLSARSIDASDIHKAALEAMRRAVIGLTLKPCHALVDGRDVPPGLPCPGSALVKGDQRSVSIAAASIVAKVTRDRMMIRAGAAHPPYGLEIHAGYATQKHRAAIESEGPVPGLHRYTFAPIKGRFDC.

The RNase H type-2 domain occupies 32-220 (KHIAGIDEAG…FAPIKGRFDC (189 aa)). The a divalent metal cation site is built by Asp38, Glu39, and Asp130.

Belongs to the RNase HII family. Requires Mn(2+) as cofactor. Mg(2+) serves as cofactor.

Its subcellular location is the cytoplasm. It carries out the reaction Endonucleolytic cleavage to 5'-phosphomonoester.. Endonuclease that specifically degrades the RNA of RNA-DNA hybrids. The chain is Ribonuclease HII from Brucella suis (strain ATCC 23445 / NCTC 10510).